A 158-amino-acid chain; its full sequence is MAIDGILKQGFITTSADKFLNWAKTGSMWPMTFGLACCAVEMMHAGAARYDLDQFGIIFRPSPRQSDLMIVAGTLCNKMAPALRKVYDQMPEPRWVVSMGSCANGGGYYHYSYSVVRGCDRIVPVDVYVPGCPPTAEALVYGLLQMQNKIRLTNTIAR.

4 residues coordinate [4Fe-4S] cluster: Cys-37, Cys-38, Cys-102, and Cys-132.

Belongs to the complex I 20 kDa subunit family. NDH-1 is composed of 14 different subunits. Subunits NuoB, C, D, E, F, and G constitute the peripheral sector of the complex. [4Fe-4S] cluster serves as cofactor.

It is found in the cell inner membrane. The catalysed reaction is a quinone + NADH + 5 H(+)(in) = a quinol + NAD(+) + 4 H(+)(out). Functionally, NDH-1 shuttles electrons from NADH, via FMN and iron-sulfur (Fe-S) centers, to quinones in the respiratory chain. Couples the redox reaction to proton translocation (for every two electrons transferred, four hydrogen ions are translocated across the cytoplasmic membrane), and thus conserves the redox energy in a proton gradient. The polypeptide is NADH-quinone oxidoreductase subunit B (Bordetella petrii (strain ATCC BAA-461 / DSM 12804 / CCUG 43448)).